The sequence spans 496 residues: Costunolide synthase (496 aa).

Residues 4-24 traverse the membrane as a helical; Signal-anchor for type II membrane protein segment; sequence FTIFSLVVASLVFFACWALVA. 4 N-linked (GlcNAc...) asparagine glycosylation sites follow: asparagine 26, asparagine 168, asparagine 280, and asparagine 412. Cysteine 434 serves as a coordination point for heme.

The protein belongs to the cytochrome P450 family. The cofactor is heme. In terms of tissue distribution, expressed in floral glandular trichomes.

Its subcellular location is the membrane. The catalysed reaction is germacra-1(10),4,11(13)-trien-12-oate + reduced [NADPH--hemoprotein reductase] + O2 = (+)-costunolide + oxidized [NADPH--hemoprotein reductase] + 2 H2O. It participates in secondary metabolite biosynthesis; terpenoid biosynthesis. Functionally, involved in the biosynthesis of germacrene-derived sesquiterpene lactones. Component of the parthenolide biosynthetic pathway; parthenolide and conjugates are promising anti-cancer drugs highly active against colon cancer cells. Hydroxylates germacrene A acid to 6-alpha-hydroxy-germacrene A acid, a precursor of sesquiterpene lactones that spontaneously undergoes a lactonization which yields costunolide. The chain is Costunolide synthase from Tanacetum parthenium (Feverfew).